We begin with the raw amino-acid sequence, 172 residues long: Adenylate kinase isoenzyme 6 (172 aa).

Residues Gly-13, Gly-15, Lys-16, Thr-17, and Thr-18 each coordinate ATP. Residues 33–56 (NVGDLAREEQLYDGYDEEYDCPIL) are NMP. Residues 33–56 (NVGDLAREEQLYDGYDEEYDCPIL) are NMPbind. An LID region spans residues 108–118 (TRGYNEKKLTD). ATP-binding residues include Arg-109 and Lys-148.

This sequence belongs to the adenylate kinase family. AK6 subfamily. In terms of assembly, monomer and homodimer. Interacts with small ribosomal subunit protein uS11. Not a structural component of 43S pre-ribosomes, but transiently interacts with them by binding to uS11. Interacts with COIL (via C-terminus). In terms of tissue distribution, expressed in heart, brain, placenta, lung, liver, skeletal muscle, kidney, pancreas, chorionic villi and the central nervous system.

It is found in the cytoplasm. The protein resides in the nucleus. Its subcellular location is the nucleoplasm. The protein localises to the cajal body. The catalysed reaction is AMP + ATP = 2 ADP. It carries out the reaction ATP + H2O = ADP + phosphate + H(+). In terms of biological role, broad-specificity nucleoside monophosphate (NMP) kinase that catalyzes the reversible transfer of the terminal phosphate group between nucleoside triphosphates and monophosphates. Also has ATPase activity. Involved in the late cytoplasmic maturation steps of the 40S ribosomal particles, specifically 18S rRNA maturation. While NMP activity is not required for ribosome maturation, ATPase activity is. Associates transiently with small ribosomal subunit protein uS11. ATP hydrolysis breaks the interaction with uS11. May temporarily remove uS11 from the ribosome to enable a conformational change of the ribosomal RNA that is needed for the final maturation step of the small ribosomal subunit. Its NMP activity may have a role in nuclear energy homeostasis. AMP and dAMP are the preferred substrates, but CMP and dCMP are also good substrates. IMP is phosphorylated to a much lesser extent. All nucleoside triphosphates ATP, GTP, UTP, CTP, dATP, dCTP, dGTP, and TTP are accepted as phosphate donors. CTP is the best phosphate donor, followed by UTP, ATP, GTP and dCTP. May be involved in regulation of Cajal body (CB) formation. The polypeptide is Adenylate kinase isoenzyme 6 (Homo sapiens (Human)).